The primary structure comprises 412 residues: Serine hydroxymethyltransferase (412 aa).

Residues leucine 117 and 121 to 123 (GHL) each bind (6S)-5,6,7,8-tetrahydrofolate. An N6-(pyridoxal phosphate)lysine modification is found at lysine 226. Glutamate 241 lines the (6S)-5,6,7,8-tetrahydrofolate pocket.

It belongs to the SHMT family. As to quaternary structure, homodimer. Pyridoxal 5'-phosphate serves as cofactor.

It localises to the cytoplasm. It carries out the reaction (6R)-5,10-methylene-5,6,7,8-tetrahydrofolate + glycine + H2O = (6S)-5,6,7,8-tetrahydrofolate + L-serine. The protein operates within one-carbon metabolism; tetrahydrofolate interconversion. Its pathway is amino-acid biosynthesis; glycine biosynthesis; glycine from L-serine: step 1/1. In terms of biological role, catalyzes the reversible interconversion of serine and glycine with tetrahydrofolate (THF) serving as the one-carbon carrier. This reaction serves as the major source of one-carbon groups required for the biosynthesis of purines, thymidylate, methionine, and other important biomolecules. Also exhibits THF-independent aldolase activity toward beta-hydroxyamino acids, producing glycine and aldehydes, via a retro-aldol mechanism. This chain is Serine hydroxymethyltransferase, found in Staphylococcus carnosus (strain TM300).